Consider the following 281-residue polypeptide: MAAAALLRRSPAARALLSPALSSRLVASKPHSSSPAPPPPPSKAGANTKTFSIYRWDPDSPSTKPHLKDYKVDLSDCGPMVLDVLLKIKNEQDPSLTFRRSCREGICGSCAMNIDGDNGLACLTKISSASSASTISPLPHMFVIKDLVVDMTNFYNQYKSVEPWLKRKDAPPQPGKEIPQTKADRAKLDGMYECILCACCSTSCPSYWWNPEEYLGPAALLHANRWIQDSRDQFTKERLDSINDEFKLYRCHTIKNCTHACPKGLNPAKHIDTIKKLQLEA.

A mitochondrion-targeting transit peptide spans 1–25 (MAAAALLRRSPAARALLSPALSSRL). The tract at residues 26–48 (VASKPHSSSPAPPPPPSKAGANT) is disordered. One can recognise a 2Fe-2S ferredoxin-type domain in the interval 49 to 141 (KTFSIYRWDP…ASTISPLPHM (93 aa)). Residues Cys-102, Cys-107, and Cys-122 each coordinate [2Fe-2S] cluster. One can recognise a 4Fe-4S ferredoxin-type domain in the interval 184–214 (DRAKLDGMYECILCACCSTSCPSYWWNPEEY). [4Fe-4S] cluster contacts are provided by Cys-194, Cys-197, and Cys-200. Cys-204 provides a ligand contact to [3Fe-4S] cluster. Trp-209 serves as a coordination point for a ubiquinone. [3Fe-4S] cluster-binding residues include Cys-251 and Cys-257. [4Fe-4S] cluster is bound at residue Cys-261.

Belongs to the succinate dehydrogenase/fumarate reductase iron-sulfur protein family. Component of complex II composed of eight subunits in plants: four classical SDH subunits SDH1, SDH2, SDH3 and SDH4 (a flavoprotein (FP), an iron-sulfur protein (IP), and a cytochrome b composed of a large and a small subunit.), as well as four subunits unknown in mitochondria from bacteria and heterotrophic eukaryotes. Requires [2Fe-2S] cluster as cofactor. The cofactor is [3Fe-4S] cluster. [4Fe-4S] cluster serves as cofactor.

Its subcellular location is the mitochondrion inner membrane. It catalyses the reaction a quinone + succinate = fumarate + a quinol. Its pathway is carbohydrate metabolism; tricarboxylic acid cycle; fumarate from succinate (eukaryal route): step 1/1. Iron-sulfur protein (IP) subunit of succinate dehydrogenase (SDH) that is involved in complex II of the mitochondrial electron transport chain and is responsible for transferring electrons from succinate to ubiquinone (coenzyme Q). This chain is Succinate dehydrogenase [ubiquinone] iron-sulfur subunit 1, mitochondrial, found in Oryza sativa subsp. japonica (Rice).